The sequence spans 236 residues: Small ribosomal subunit protein eS6 (236 aa).

Residues S232 and S233 each carry the phosphoserine modification.

This sequence belongs to the eukaryotic ribosomal protein eS6 family. In terms of processing, phosphorylated.

This is Small ribosomal subunit protein eS6 (RPS6) from Kluyveromyces lactis (strain ATCC 8585 / CBS 2359 / DSM 70799 / NBRC 1267 / NRRL Y-1140 / WM37) (Yeast).